The chain runs to 338 residues: Popeye domain-containing protein 1-A (338 aa).

Over 1–40 the chain is Extracellular; the sequence is MTTESIFITTLPMDFNSQFDNITIGLNDNETLCENWREIH. 2 N-linked (GlcNAc...) asparagine glycosylation sites follow: asparagine 21 and asparagine 29. The helical transmembrane segment at 41–61 threads the bilayer; the sequence is HLVFHLANTCFAAGLVIPSTL. Residues 62–65 lie on the Cytoplasmic side of the membrane; that stretch reads NLHM. The chain crosses the membrane as a helical span at residues 66 to 86; sequence LFLRGMLCLGCTFFIIWAVLF. Residues 87–91 are Extracellular-facing; sequence RCALD. A helical membrane pass occupies residues 92–112; sequence IMIWNATFLSINFMHFVYLVY. Residues 113-338 lie on the Cytoplasmic side of the membrane; sequence KKRPIKIKKE…VGPLSHAVFC (226 aa). The disordered stretch occupies residues 296-317; sequence TNDNEDGLQNFLRGTSTTSSQR. The segment covering 307–317 has biased composition (polar residues); the sequence is LRGTSTTSSQR.

Belongs to the popeye family. Expressed in the heart.

The protein localises to the lateral cell membrane. The protein resides in the cell junction. Its subcellular location is the tight junction. It is found in the membrane. Functionally, cell adhesion molecule involved in the establishment and/or maintenance of cell integrity. Plays a role in vamp3-mediated vesicular transport and recycling of different receptor molecules. May be involved in the formation and regulation of the tight junction (TJ) paracellular permeability barrier in epithelial cells. May induce primordial adhesive contact and aggregation of epithelial cells in a Ca(2+)-independent manner. May be involved in epithelial movement during corneal sheet formation and regeneration. May play a role in the regulation of cell shape and movement by modulating the Rho-GTPase activity. May also be involved in striated muscle regeneration and in the regulation of cell spreading. The polypeptide is Popeye domain-containing protein 1-A (popdc1-a) (Xenopus laevis (African clawed frog)).